We begin with the raw amino-acid sequence, 175 residues long: Large ribosomal subunit protein uL6 (175 aa).

This sequence belongs to the universal ribosomal protein uL6 family. As to quaternary structure, part of the 50S ribosomal subunit.

Its function is as follows. This protein binds to the 23S rRNA, and is important in its secondary structure. It is located near the subunit interface in the base of the L7/L12 stalk, and near the tRNA binding site of the peptidyltransferase center. In Xylella fastidiosa (strain M23), this protein is Large ribosomal subunit protein uL6.